The following is a 605-amino-acid chain: FAD-linked oxidoreductase easE (605 aa).

An N-terminal signal peptide occupies residues 1–20; it reads MRHFVTFVVGFLLSWGFLSS. 2 N-linked (GlcNAc...) asparagine glycosylation sites follow: N46 and N105. Residues 122–307 enclose the FAD-binding PCMH-type domain; that stretch reads CHQGRLPLYS…TQATVRAFPD (186 aa). N370 carries an N-linked (GlcNAc...) asparagine glycan.

Belongs to the oxygen-dependent FAD-linked oxidoreductase family. It depends on FAD as a cofactor.

It participates in alkaloid biosynthesis; ergot alkaloid biosynthesis. Functionally, FAD-linked oxidoreductase; part of the gene cluster that mediates the biosynthesis of fungal ergot alkaloid ergovaline, the predominant ergopeptine product in E.festucae var. lolii. DmaW catalyzes the first step of ergot alkaloid biosynthesis by condensing dimethylallyl diphosphate (DMAP) and tryptophan to form 4-dimethylallyl-L-tryptophan. The second step is catalyzed by the methyltransferase easF that methylates 4-dimethylallyl-L-tryptophan in the presence of S-adenosyl-L-methionine, resulting in the formation of 4-dimethylallyl-L-abrine. The catalase easC and the FAD-dependent oxidoreductase easE then transform 4-dimethylallyl-L-abrine to chanoclavine-I which is further oxidized by easD in the presence of NAD(+), resulting in the formation of chanoclavine-I aldehyde. Agroclavine dehydrogenase easG then mediates the conversion of chanoclavine-I aldehyde to agroclavine via a non-enzymatic adduct reaction: the substrate is an iminium intermediate that is formed spontaneously from chanoclavine-I aldehyde in the presence of glutathione. The presence of easA is not required to complete this reaction. Further conversion of agroclavine to paspalic acid is a two-step process involving oxidation of agroclavine to elymoclavine and of elymoclavine to paspalic acid, the second step being performed by the elymoclavine oxidase cloA. Paspalic acid is then further converted to D-lysergic acid. Ergovaline is assembled from D-lysergic acid and three different amino acids by the D-lysergyl-peptide-synthetase composed of a monomudular (lpsB) and a trimodular (lpsA) nonribosomal peptide synthetase subunit. This chain is FAD-linked oxidoreductase easE, found in Epichloe festucae var. lolii (Neotyphodium lolii).